A 229-amino-acid polypeptide reads, in one-letter code: Cytidylate kinase (229 aa).

Residue 10–18 coordinates ATP; that stretch reads GFSSCGKST.

This sequence belongs to the cytidylate kinase family. Type 1 subfamily.

It localises to the cytoplasm. The catalysed reaction is CMP + ATP = CDP + ADP. The enzyme catalyses dCMP + ATP = dCDP + ADP. This is Cytidylate kinase from Bacteroides thetaiotaomicron (strain ATCC 29148 / DSM 2079 / JCM 5827 / CCUG 10774 / NCTC 10582 / VPI-5482 / E50).